A 337-amino-acid chain; its full sequence is Ribosomal RNA small subunit methyltransferase H (337 aa).

S-adenosyl-L-methionine contacts are provided by residues 35 to 37 (GGY), D54, F81, D102, and Q109. Residues 286-316 (PVGPSEAEAAANPRARSAKLRAGERTDAPAP) form a disordered region. Low complexity predominate over residues 289–300 (PSEAEAAANPRA).

It belongs to the methyltransferase superfamily. RsmH family.

It is found in the cytoplasm. The enzyme catalyses cytidine(1402) in 16S rRNA + S-adenosyl-L-methionine = N(4)-methylcytidine(1402) in 16S rRNA + S-adenosyl-L-homocysteine + H(+). Functionally, specifically methylates the N4 position of cytidine in position 1402 (C1402) of 16S rRNA. This Methylobacterium sp. (strain 4-46) protein is Ribosomal RNA small subunit methyltransferase H.